An 85-amino-acid chain; its full sequence is Cell division topological specificity factor (85 aa).

This sequence belongs to the MinE family.

In terms of biological role, prevents the cell division inhibition by proteins MinC and MinD at internal division sites while permitting inhibition at polar sites. This ensures cell division at the proper site by restricting the formation of a division septum at the midpoint of the long axis of the cell. The sequence is that of Cell division topological specificity factor from Xanthomonas campestris pv. campestris (strain 8004).